A 328-amino-acid polypeptide reads, in one-letter code: Porphobilinogen deaminase (328 aa).

Cys245 is subject to S-(dipyrrolylmethanemethyl)cysteine.

Belongs to the HMBS family. As to quaternary structure, monomer. It depends on dipyrromethane as a cofactor.

The catalysed reaction is 4 porphobilinogen + H2O = hydroxymethylbilane + 4 NH4(+). It functions in the pathway porphyrin-containing compound metabolism; protoporphyrin-IX biosynthesis; coproporphyrinogen-III from 5-aminolevulinate: step 2/4. The protein operates within porphyrin-containing compound metabolism; chlorophyll biosynthesis. In terms of biological role, tetrapolymerization of the monopyrrole PBG into the hydroxymethylbilane pre-uroporphyrinogen in several discrete steps. This is Porphobilinogen deaminase from Gloeobacter violaceus (strain ATCC 29082 / PCC 7421).